We begin with the raw amino-acid sequence, 347 residues long: NADH-quinone oxidoreductase subunit H (347 aa).

The next 8 membrane-spanning stretches (helical) occupy residues 25 to 45 (ILFMVVQSLVIFLVVVIVAAM), 95 to 115 (FMFTLAPAVAMFTALASFAII), 128 to 148 (IGILFFFAMAGIAVYAVLFGG), 168 to 188 (ISYEVFLGLSLMGVVALTGSF), 200 to 220 (GWYIIPQFFGFLTFVVAGVAV), 251 to 271 (FFIGEYVNVVLISALMTCLFF), 284 to 304 (FIPPAFWFMIKTLFFMTMFVL), and 324 to 344 (VCLPVTLINLLVTAAVILIFS).

The protein belongs to the complex I subunit 1 family. In terms of assembly, NDH-1 is composed of 14 different subunits. Subunits NuoA, H, J, K, L, M, N constitute the membrane sector of the complex.

The protein localises to the cell inner membrane. It carries out the reaction a quinone + NADH + 5 H(+)(in) = a quinol + NAD(+) + 4 H(+)(out). In terms of biological role, NDH-1 shuttles electrons from NADH, via FMN and iron-sulfur (Fe-S) centers, to quinones in the respiratory chain. The immediate electron acceptor for the enzyme in this species is believed to be ubiquinone. Couples the redox reaction to proton translocation (for every two electrons transferred, four hydrogen ions are translocated across the cytoplasmic membrane), and thus conserves the redox energy in a proton gradient. This subunit may bind ubiquinone. In Psychrobacter cryohalolentis (strain ATCC BAA-1226 / DSM 17306 / VKM B-2378 / K5), this protein is NADH-quinone oxidoreductase subunit H.